The primary structure comprises 639 residues: Immunoglobulin-like domain-containing receptor 2 (639 aa).

A signal peptide spans 1 to 20 (MDRVLLRWISLFWLTAMVEG). The 142-residue stretch at 21 to 162 (LQVTVPDKKK…LEGKNEDSVE (142 aa)) folds into the Ig-like V-type domain. Residues 21–186 (LQVTVPDKKK…PSFAVEIMPE (166 aa)) are Lumenal-facing. A disulfide bridge links Cys-42 with Cys-145. The chain crosses the membrane as a helical span at residues 187 to 207 (WVFVGLVLLGVFLFFVLVGIC). Residues 208-639 (WCQCCPHSCC…DFPTRMSLVV (432 aa)) are Cytoplasmic-facing. Disordered regions lie at residues 273-295 (LMDKPHPPPLAPSDSTGGSHSVR), 374-415 (WSGV…MLSR), and 437-639 (YGQR…SLVV). 2 stretches are compositionally biased toward basic and acidic residues: residues 393–414 (YNKEDRESFRHSQPRSKSEMLS) and 442–464 (RRADGNSHEARGGSRFERSESRA). Ser-473 is subject to Phosphoserine. Residues 483–493 (RSREPLTDADR) are compositionally biased toward basic and acidic residues. The residue at position 544 (Arg-544) is an Omega-N-methylarginine. Ser-579 is modified (phosphoserine). Residues 606–617 (RGRDLPYHSNSE) show a composition bias toward basic and acidic residues.

This sequence belongs to the immunoglobulin superfamily. LISCH7 family. Interacts with MARVELD2 and OCLN. Interacts with P4HB AND HSPA5; the interaction with HSPA5 stabilizes ILDR2 expression. Interacts (via C-terminus) with TRA2A, TRA2B and SRSF1. Expressed in testis, brain, pituitary, colon, heart, nerves, prostate, esophagus, lung liver and small intestine. Highly expressed in macrophages, also expressed in monocytes and at low levels in NK and NKT cells (at protein level).

The protein localises to the endoplasmic reticulum membrane. Its subcellular location is the cell junction. It localises to the tight junction. The protein resides in the nucleus. Its function is as follows. May be involved in ER stress pathways with effects on lipid homeostasis and insulin secretion. With ILDR1 and LSR, involved in the maintain of the epithelial barrier function through the recruitment of MARVELD2/tricellulin to tricellular tight junctions. Also functions as a B7-like protein family member expressed on immune cells and inflamed tissue and with T-cell inhibitory activity. In the inner ear, may regulate alternative pre-mRNA splicing via binding to TRA2A, TRA2B and SRSF1. The protein is Immunoglobulin-like domain-containing receptor 2 of Homo sapiens (Human).